The chain runs to 258 residues: L-fucose dehydrogenase (258 aa).

NADP(+) contacts are provided by serine 17, isoleucine 19, arginine 39, histidine 40, glutamate 63, leucine 64, and asparagine 90. Asparagine 94, serine 140, lysine 141, glutamine 147, and tyrosine 153 together coordinate beta-L-fucose. The NADP(+) site is built by tyrosine 153 and lysine 157. Tyrosine 153 functions as the Proton acceptor in the catalytic mechanism. Beta-L-fucose is bound by residues alanine 184 and glutamate 185. Valine 186 and threonine 188 together coordinate NADP(+).

Belongs to the short-chain dehydrogenases/reductases (SDR) family. As to quaternary structure, homotetramer; dimer of dimers.

The enzyme catalyses beta-L-fucose + NADP(+) = L-fucono-1,5-lactone + NADPH + H(+). The catalysed reaction is D-arabinose + NADP(+) = D-arabinono-1,5-lactone + NADPH + H(+). It participates in carbohydrate degradation; L-fucose degradation. In terms of biological role, L-fucose dehydrogenase involved in an L-fucose degradation pathway. Catalyzes the oxidation of L-fucose to L-fucono-1,5-lactone. Can also act on D-arabinose, with lower catalytic efficiency, and has weak activity with L-galactose and 4-deoxy-L-fucose. Shows a preference for NADP(+) over NAD(+). The chain is L-fucose dehydrogenase from Burkholderia multivorans (strain ATCC 17616 / 249).